Consider the following 342-residue polypeptide: Phosphoribosylformylglycinamidine cyclo-ligase (342 aa).

It belongs to the AIR synthase family.

The protein resides in the cytoplasm. The enzyme catalyses 2-formamido-N(1)-(5-O-phospho-beta-D-ribosyl)acetamidine + ATP = 5-amino-1-(5-phospho-beta-D-ribosyl)imidazole + ADP + phosphate + H(+). It functions in the pathway purine metabolism; IMP biosynthesis via de novo pathway; 5-amino-1-(5-phospho-D-ribosyl)imidazole from N(2)-formyl-N(1)-(5-phospho-D-ribosyl)glycinamide: step 2/2. This Staphylococcus aureus (strain bovine RF122 / ET3-1) protein is Phosphoribosylformylglycinamidine cyclo-ligase.